The primary structure comprises 118 residues: Beta-elicitin cryptogein (118 aa).

Residues 1–20 (MNFTALLAAVAAALVGSANA) form the signal peptide. 3 disulfides stabilise this stretch: C23/C91, C47/C76, and C71/C115.

This sequence belongs to the elicitin family.

The protein localises to the secreted. In terms of biological role, induces local and distal defense responses (incompatible hypersensitive reaction) in plants from the solanaceae and cruciferae families. Elicits leaf necrosis and causes the accumulation of pathogenesis-related proteins. Might interact with the lipidic molecules of the plasma membrane. This is Beta-elicitin cryptogein from Phytophthora cryptogea.